Here is a 323-residue protein sequence, read N- to C-terminus: Quinolinate synthase (323 aa).

The iminosuccinate site is built by His-38 and Ser-55. Cys-100 provides a ligand contact to [4Fe-4S] cluster. Iminosuccinate-binding positions include 126-128 (YIN) and Ser-143. [4Fe-4S] cluster is bound at residue Cys-186. Iminosuccinate contacts are provided by residues 212–214 (HPE) and Thr-229. Residue Cys-279 participates in [4Fe-4S] cluster binding.

Belongs to the quinolinate synthase family. Type 2 subfamily. [4Fe-4S] cluster serves as cofactor.

It localises to the cytoplasm. The enzyme catalyses iminosuccinate + dihydroxyacetone phosphate = quinolinate + phosphate + 2 H2O + H(+). It participates in cofactor biosynthesis; NAD(+) biosynthesis; quinolinate from iminoaspartate: step 1/1. In terms of biological role, catalyzes the condensation of iminoaspartate with dihydroxyacetone phosphate to form quinolinate. The sequence is that of Quinolinate synthase from Gloeothece citriformis (strain PCC 7424) (Cyanothece sp. (strain PCC 7424)).